Reading from the N-terminus, the 310-residue chain is tRNA dimethylallyltransferase (310 aa).

15-22 (GATASGKT) provides a ligand contact to ATP. Position 17 to 22 (17 to 22 (TASGKT)) interacts with substrate.

Belongs to the IPP transferase family. In terms of assembly, monomer. Mg(2+) is required as a cofactor.

The catalysed reaction is adenosine(37) in tRNA + dimethylallyl diphosphate = N(6)-dimethylallyladenosine(37) in tRNA + diphosphate. Functionally, catalyzes the transfer of a dimethylallyl group onto the adenine at position 37 in tRNAs that read codons beginning with uridine, leading to the formation of N6-(dimethylallyl)adenosine (i(6)A). This chain is tRNA dimethylallyltransferase, found in Nocardioides sp. (strain ATCC BAA-499 / JS614).